The primary structure comprises 469 residues: Exodeoxyribonuclease 7 large subunit (469 aa).

Belongs to the XseA family. In terms of assembly, heterooligomer composed of large and small subunits.

The protein localises to the cytoplasm. The enzyme catalyses Exonucleolytic cleavage in either 5'- to 3'- or 3'- to 5'-direction to yield nucleoside 5'-phosphates.. Its function is as follows. Bidirectionally degrades single-stranded DNA into large acid-insoluble oligonucleotides, which are then degraded further into small acid-soluble oligonucleotides. This Mycoplasma mycoides subsp. mycoides SC (strain CCUG 32753 / NCTC 10114 / PG1) protein is Exodeoxyribonuclease 7 large subunit.